We begin with the raw amino-acid sequence, 239 residues long: MLGKTQADQGAAVIRAERLGKTYAEGKMRTPVFDGLDLSVATGETVAIVGASGAGKSTLLHLLGGLDIPTSGEVYVAGRRMSALSDGERGKLRNRSLGFVYQFHHLLPEFTALENVMMPVLLSGQDVSIARGQALQLLESVGLGHRVEHKPSELSGGERQRCAVARALVNKPGCVLGDEPTGNLDDKTAGTVFELMLELNRAQRTSLVLVTHDRSLARRLDRVLELHQGKLRELAPSAV.

An ABC transporter domain is found at isoleucine 14 to valine 239. Glycine 50 to serine 57 lines the ATP pocket.

This sequence belongs to the ABC transporter superfamily. Lipoprotein translocase (TC 3.A.1.125) family. In terms of assembly, the complex is composed of two ATP-binding proteins (LolD) and two transmembrane proteins (LolC and LolE).

The protein localises to the cell inner membrane. In terms of biological role, part of the ABC transporter complex LolCDE involved in the translocation of mature outer membrane-directed lipoproteins, from the inner membrane to the periplasmic chaperone, LolA. Responsible for the formation of the LolA-lipoprotein complex in an ATP-dependent manner. In Xanthomonas campestris pv. campestris (strain 8004), this protein is Lipoprotein-releasing system ATP-binding protein LolD.